Here is a 384-residue protein sequence, read N- to C-terminus: N-acetyldiaminopimelate deacetylase (384 aa).

Asp75 is a catalytic residue. Glu134 functions as the Proton acceptor in the catalytic mechanism.

It belongs to the peptidase M20A family. N-acetyldiaminopimelate deacetylase subfamily.

It carries out the reaction N-acetyl-(2S,6S)-2,6-diaminopimelate + H2O = (2S,6S)-2,6-diaminopimelate + acetate. The protein operates within amino-acid biosynthesis; L-lysine biosynthesis via DAP pathway; LL-2,6-diaminopimelate from (S)-tetrahydrodipicolinate (acetylase route): step 3/3. In terms of biological role, catalyzes the conversion of N-acetyl-diaminopimelate to diaminopimelate and acetate. The sequence is that of N-acetyldiaminopimelate deacetylase from Lactobacillus helveticus (strain DPC 4571).